We begin with the raw amino-acid sequence, 338 residues long: NADPH dehydrogenase (338 aa).

Residue 23–26 (SPMC) participates in FMN binding. Tyrosine 28 contacts substrate. 2 residues coordinate FMN: alanine 60 and glutamine 102. 163-166 (HGAH) provides a ligand contact to substrate. FMN is bound by residues arginine 214 and 306–307 (AR).

It belongs to the NADH:flavin oxidoreductase/NADH oxidase family. NamA subfamily. As to quaternary structure, homotetramer. Requires FMN as cofactor.

The catalysed reaction is A + NADPH + H(+) = AH2 + NADP(+). In terms of biological role, catalyzes the reduction of the double bond of an array of alpha,beta-unsaturated aldehydes and ketones. It also reduces the nitro group of nitroester and nitroaromatic compounds. It could have a role in detoxification processes. This chain is NADPH dehydrogenase, found in Halalkalibacterium halodurans (strain ATCC BAA-125 / DSM 18197 / FERM 7344 / JCM 9153 / C-125) (Bacillus halodurans).